The primary structure comprises 129 residues: Small ribosomal subunit protein uS11 (129 aa).

Belongs to the universal ribosomal protein uS11 family. Part of the 30S ribosomal subunit. Interacts with proteins S7 and S18. Binds to IF-3.

Located on the platform of the 30S subunit, it bridges several disparate RNA helices of the 16S rRNA. Forms part of the Shine-Dalgarno cleft in the 70S ribosome. The polypeptide is Small ribosomal subunit protein uS11 (Pectobacterium atrosepticum (strain SCRI 1043 / ATCC BAA-672) (Erwinia carotovora subsp. atroseptica)).